We begin with the raw amino-acid sequence, 556 residues long: Urocanate hydratase (556 aa).

NAD(+) contacts are provided by residues 52–53 (GG), Gln130, 176–178 (GMG), Glu196, Arg201, 242–243 (NA), 263–267 (QTSAH), 273–274 (YL), and Tyr322. Cys410 is a catalytic residue. Gly492 contacts NAD(+).

This sequence belongs to the urocanase family. It depends on NAD(+) as a cofactor.

It is found in the cytoplasm. The catalysed reaction is 4-imidazolone-5-propanoate = trans-urocanate + H2O. The protein operates within amino-acid degradation; L-histidine degradation into L-glutamate; N-formimidoyl-L-glutamate from L-histidine: step 2/3. Catalyzes the conversion of urocanate to 4-imidazolone-5-propionate. In Shewanella sediminis (strain HAW-EB3), this protein is Urocanate hydratase.